The sequence spans 144 residues: Large ribosomal subunit protein uL22 (144 aa).

The disordered stretch occupies residues 1–38; it reads MAETQTTKKGAKRVRQPVPARRSKPNRPAKAAPGPHAS. A compositionally biased stretch (basic residues) spans 9–27; the sequence is KGAKRVRQPVPARRSKPNR.

The protein belongs to the universal ribosomal protein uL22 family. In terms of assembly, part of the 50S ribosomal subunit.

This protein binds specifically to 23S rRNA; its binding is stimulated by other ribosomal proteins, e.g. L4, L17, and L20. It is important during the early stages of 50S assembly. It makes multiple contacts with different domains of the 23S rRNA in the assembled 50S subunit and ribosome. In terms of biological role, the globular domain of the protein is located near the polypeptide exit tunnel on the outside of the subunit, while an extended beta-hairpin is found that lines the wall of the exit tunnel in the center of the 70S ribosome. This Anaeromyxobacter sp. (strain Fw109-5) protein is Large ribosomal subunit protein uL22.